An 836-amino-acid polypeptide reads, in one-letter code: Sucrose synthase 5 (836 aa).

The segment at 270 to 748 is GT-B glycosyltransferase; that stretch reads RIFNVVIFSV…GLQRINECYT (479 aa). Residues 805–836 form a disordered region; it reads PPPLPPKPLVKPSASKGSKRTQPRLSFRLFGA.

It belongs to the glycosyltransferase 1 family. Plant sucrose synthase subfamily. In terms of tissue distribution, detected in the whole plant but more precisely confined to the vasculature in cotyledons, leaves, petals, anthers and roots. Also detected in developing siliques, young immature rosette and cauline leaves.

The protein localises to the secreted. The protein resides in the cell wall. It catalyses the reaction an NDP-alpha-D-glucose + D-fructose = a ribonucleoside 5'-diphosphate + sucrose + H(+). Sucrose-cleaving enzyme that provides UDP-glucose and fructose for various metabolic pathways. Functions in callose synthesis at the site of phloem sieve elements. The sequence is that of Sucrose synthase 5 (SUS5) from Arabidopsis thaliana (Mouse-ear cress).